A 328-amino-acid chain; its full sequence is D-cysteine desulfhydrase (328 aa).

Lysine 51 is modified (N6-(pyridoxal phosphate)lysine).

The protein belongs to the ACC deaminase/D-cysteine desulfhydrase family. As to quaternary structure, homodimer. Requires pyridoxal 5'-phosphate as cofactor.

It carries out the reaction D-cysteine + H2O = hydrogen sulfide + pyruvate + NH4(+) + H(+). Catalyzes the alpha,beta-elimination reaction of D-cysteine and of several D-cysteine derivatives. It could be a defense mechanism against D-cysteine. In Escherichia coli O9:H4 (strain HS), this protein is D-cysteine desulfhydrase.